The chain runs to 126 residues: Histone H2B-alpha (126 aa).

Positions methionine 1 to lysine 34 are disordered. Lysine 6 and lysine 7 each carry N6-acetyllysine; alternate. Glycyl lysine isopeptide (Lys-Gly) (interchain with G-Cter in SUMO); alternate cross-links involve residues lysine 6 and lysine 7. Serine 10 is subject to Phosphoserine. At lysine 11 the chain carries N6-acetyllysine. The span at alanine 17–lysine 27 shows a compositional bias: basic and acidic residues. Lysine 120 participates in a covalent cross-link: Glycyl lysine isopeptide (Lys-Gly) (interchain with G-Cter in ubiquitin).

The protein belongs to the histone H2B family. The nucleosome is a histone octamer containing two molecules each of H2A, H2B, H3 and H4 assembled in one H3-H4 heterotetramer and two H2A-H2B heterodimers. The octamer wraps approximately 147 bp of DNA. Interacts with rik1. In terms of processing, monoubiquitinated by the rhp6/ubc2-bre1 complex to form H2BK123ub1. H2BK123ub1 gives a specific tag for epigenetic transcriptional activation and is also prerequisite for H3K4me and H3K79me formation. H2BK123ub1 also modulates the formation of double-strand breaks during meiosis and is a prerequisite for DNA-damage checkpoint activation. Post-translationally, phosphorylated by shk1 to form H2BS10ph during progression through meiotic prophase. May be correlated with chromosome condensation. Acetylation of N-terminal lysines and particularly formation of H2BK11ac has a positive effect on transcription. In terms of processing, sumoylation to form H2BK6su or H2BK7su occurs preferentially near the telomeres and represses gene transcription.

The protein localises to the nucleus. The protein resides in the chromosome. Functionally, core component of nucleosome. Nucleosomes wrap and compact DNA into chromatin, limiting DNA accessibility to the cellular machineries which require DNA as a template. Histones thereby play a central role in transcription regulation, DNA repair, DNA replication and chromosomal stability. DNA accessibility is regulated via a complex set of post-translational modifications of histones, also called histone code, and nucleosome remodeling. The polypeptide is Histone H2B-alpha (htb1) (Schizosaccharomyces pombe (strain 972 / ATCC 24843) (Fission yeast)).